The chain runs to 282 residues: Small ribosomal subunit protein uS3 (282 aa).

The KH type-2 domain maps to 43–111 (IRRLMSKGME…QVQLNILEVK (69 aa)). The segment at 217–282 (AQSQAAAPRA…IGKGSNGTEA (66 aa)) is disordered. Residues 228-240 (RRNERGDRPDRGA) show a composition bias toward basic and acidic residues. Over residues 256-269 (AVATGSAPTGTAAT) the composition is skewed to low complexity.

The protein belongs to the universal ribosomal protein uS3 family. In terms of assembly, part of the 30S ribosomal subunit. Forms a tight complex with proteins S10 and S14.

Binds the lower part of the 30S subunit head. Binds mRNA in the 70S ribosome, positioning it for translation. The polypeptide is Small ribosomal subunit protein uS3 (Kineococcus radiotolerans (strain ATCC BAA-149 / DSM 14245 / SRS30216)).